The sequence spans 611 residues: MSETLERHAFGAEVGRLLDLVVHALYSEREIFLRELVANAADAVDRRRFGALTDPALALPAEAKVRIRPDKAARTLTISDPGIGMGKEDLAQNLGTIARSGTRAFSQSLAEAKPDERPSLIGQFGVGFYSAFMVADRVEVTSRRAGSDEAWTWASDGEGEYTLSPATREEPGTDVVLHMKADADEYLEPLRIETIVRKWADHITVPITLLRDGEEVSGNEGTALWRKPKAEITEETYTAFYRHLTHNFDTPWATLHWRAEGALDFSALLFIPSMKPFLAVEEERESKVRLHVRRMFITDEAGLLPSWLRFVQGVVDTEDLPLNVSREMLQATPVLARIRRAVTAKVLSELKSRAKDADGYASFWQAFGPVLKEGIWEDAEQRDDIAGLIRFRSSAVEGWTSFADYVSRMKPNQEAIYILVGDDTKALASSAQIEGFRARGIEVLLLSDHVDAFWPERLDKFDGKPIRSITQSADDLSAFAPEGESEGEAADLADLVPKLKEILKDDVTDVRASQRLVESAVLLSASSGGPDLQMQRLLRRAGRGFGAGLPVLELNPRHALVRRLAERAKTGEDIAEAAQTLLDLAHVQGGDAPRDPVAFARRVATALAAQG.

The tract at residues 1–326 (MSETLERHAF…TEDLPLNVSR (326 aa)) is a; substrate-binding. Residues 327–536 (EMLQATPVLA…SGGPDLQMQR (210 aa)) are b. Positions 537-611 (LLRRAGRGFG…RVATALAAQG (75 aa)) are c.

This sequence belongs to the heat shock protein 90 family. As to quaternary structure, homodimer.

The protein resides in the cytoplasm. Functionally, molecular chaperone. Has ATPase activity. The chain is Chaperone protein HtpG from Methylobacterium nodulans (strain LMG 21967 / CNCM I-2342 / ORS 2060).